Here is an 85-residue protein sequence, read N- to C-terminus: Large ribosomal subunit protein bL31B (85 aa).

It belongs to the bacterial ribosomal protein bL31 family. Type B subfamily. Part of the 50S ribosomal subunit.

This Macrococcus caseolyticus (strain JCSC5402) (Macrococcoides caseolyticum) protein is Large ribosomal subunit protein bL31B.